Reading from the N-terminus, the 325-residue chain is MNSSFHLHFLDLNLNATEGNLSGPNVKNKSSPCEDMGIAVEVFLTLGVISLLENILVIGAIVKNKNLHSPMYFFVCSLAVADMLVSMSSAWETITIYLLNNKHLVIADAFVRHIDNVFDSMICISVVASMCSLLAIAVDRYVTIFYALRYHHIMTARRSGAIIAGIWAFCTGCGIVFILYSESTYVILCLISMFFAMLFLLVSLYIHMFLLARTHVKRIAALPGASSARQRTSMQGAVTVTMLLGVFTVCWAPFFLHLTLMLSCPQNLYCSRFMSHFNMYLILIMCNSVMDPLIYAFRSQEMRKTFKEIICCRGFRIACSFPRRD.

At 1 to 37 (MNSSFHLHFLDLNLNATEGNLSGPNVKNKSSPCEDMG) the chain is on the extracellular side. N-linked (GlcNAc...) asparagine glycosylation is found at N2, N15, N20, and N28. Residues 38–61 (IAVEVFLTLGVISLLENILVIGAI) traverse the membrane as a helical segment. The Cytoplasmic segment spans residues 62–73 (VKNKNLHSPMYF). A helical transmembrane segment spans residues 74–97 (FVCSLAVADMLVSMSSAWETITIY). The Extracellular segment spans residues 98–114 (LLNNKHLVIADAFVRHI). The helical transmembrane segment at 115-138 (DNVFDSMICISVVASMCSLLAIAV) threads the bilayer. Residues 139–155 (DRYVTIFYALRYHHIMT) lie on the Cytoplasmic side of the membrane. Residues 156 to 179 (ARRSGAIIAGIWAFCTGCGIVFIL) form a helical membrane-spanning segment. Residues 180–186 (YSESTYV) lie on the Extracellular side of the membrane. Residues 187–211 (ILCLISMFFAMLFLLVSLYIHMFLL) form a helical membrane-spanning segment. Topologically, residues 212-239 (ARTHVKRIAALPGASSARQRTSMQGAVT) are cytoplasmic. Residues 240–265 (VTMLLGVFTVCWAPFFLHLTLMLSCP) traverse the membrane as a helical segment. The Extracellular segment spans residues 266–273 (QNLYCSRF). Residues 274–297 (MSHFNMYLILIMCNSVMDPLIYAF) form a helical membrane-spanning segment. The Cytoplasmic portion of the chain corresponds to 298-325 (RSQEMRKTFKEIICCRGFRIACSFPRRD). S-palmitoyl cysteine attachment occurs at residues C311 and C312.

Belongs to the G-protein coupled receptor 1 family. In terms of tissue distribution, expressed in the brain but not in the melanoma cells.

The protein localises to the cell membrane. Its function is as follows. Receptor for MSH (alpha, beta and gamma) and ACTH. The activity of this receptor is mediated by G proteins which activate adenylate cyclase. This receptor is a possible mediator of the immunomodulation properties of melanocortins. The sequence is that of Melanocortin receptor 5 (MC5R) from Homo sapiens (Human).